The following is a 384-amino-acid chain: Galactokinase (384 aa).

A substrate-binding site is contributed by Glu-34–Asp-37. An ATP-binding site is contributed by Ser-123–Ser-129. Residues Ser-129 and Glu-161 each coordinate Mg(2+). Asp-173 (proton acceptor) is an active-site residue. Tyr-222 serves as a coordination point for substrate.

This sequence belongs to the GHMP kinase family. GalK subfamily.

It is found in the cytoplasm. The catalysed reaction is alpha-D-galactose + ATP = alpha-D-galactose 1-phosphate + ADP + H(+). Its pathway is carbohydrate metabolism; galactose metabolism. Its function is as follows. Catalyzes the transfer of the gamma-phosphate of ATP to D-galactose to form alpha-D-galactose-1-phosphate (Gal-1-P). In Actinobacillus pleuropneumoniae serotype 5b (strain L20), this protein is Galactokinase.